The chain runs to 338 residues: Ketol-acid reductoisomerase (NADP(+)) (338 aa).

Residues 1–181 (MKVFYDKDAD…GGGRAGIIET (181 aa)) enclose the KARI N-terminal Rossmann domain. Residues 24–27 (YGSQ), Arg-47, and Ser-52 contribute to the NADP(+) site. The active site involves His-107. NADP(+) is bound at residue Gly-133. A KARI C-terminal knotted domain is found at 182–327 (NFREETETDL…AKLRAMMPWI (146 aa)). 4 residues coordinate Mg(2+): Asp-190, Glu-194, Glu-226, and Glu-230. Ser-251 is a binding site for substrate.

This sequence belongs to the ketol-acid reductoisomerase family. Mg(2+) is required as a cofactor.

It carries out the reaction (2R)-2,3-dihydroxy-3-methylbutanoate + NADP(+) = (2S)-2-acetolactate + NADPH + H(+). It catalyses the reaction (2R,3R)-2,3-dihydroxy-3-methylpentanoate + NADP(+) = (S)-2-ethyl-2-hydroxy-3-oxobutanoate + NADPH + H(+). It functions in the pathway amino-acid biosynthesis; L-isoleucine biosynthesis; L-isoleucine from 2-oxobutanoate: step 2/4. Its pathway is amino-acid biosynthesis; L-valine biosynthesis; L-valine from pyruvate: step 2/4. Its function is as follows. Involved in the biosynthesis of branched-chain amino acids (BCAA). Catalyzes an alkyl-migration followed by a ketol-acid reduction of (S)-2-acetolactate (S2AL) to yield (R)-2,3-dihydroxy-isovalerate. In the isomerase reaction, S2AL is rearranged via a Mg-dependent methyl migration to produce 3-hydroxy-3-methyl-2-ketobutyrate (HMKB). In the reductase reaction, this 2-ketoacid undergoes a metal-dependent reduction by NADPH to yield (R)-2,3-dihydroxy-isovalerate. In Ralstonia pickettii (strain 12J), this protein is Ketol-acid reductoisomerase (NADP(+)).